The primary structure comprises 235 residues: NAD(P)H-hydrate epimerase (235 aa).

A YjeF N-terminal domain is found at 12-218 (AIVMDQLLMG…EFLKETNLTI (207 aa)). Residue 62–66 (NNGGD) coordinates (6S)-NADPHX. K(+) is bound by residues Asn-63 and Asp-127. Residues 131 to 137 (GYSFKGD) and Asp-161 each bind (6S)-NADPHX. Ser-164 is a K(+) binding site.

The protein belongs to the NnrE/AIBP family. K(+) is required as a cofactor.

The catalysed reaction is (6R)-NADHX = (6S)-NADHX. The enzyme catalyses (6R)-NADPHX = (6S)-NADPHX. Functionally, catalyzes the epimerization of the S- and R-forms of NAD(P)HX, a damaged form of NAD(P)H that is a result of enzymatic or heat-dependent hydration. This is a prerequisite for the S-specific NAD(P)H-hydrate dehydratase to allow the repair of both epimers of NAD(P)HX. This is NAD(P)H-hydrate epimerase from Dictyostelium discoideum (Social amoeba).